Reading from the N-terminus, the 139-residue chain is Transcription antitermination protein NusB (139 aa).

Belongs to the NusB family.

Its function is as follows. Involved in transcription antitermination. Required for transcription of ribosomal RNA (rRNA) genes. Binds specifically to the boxA antiterminator sequence of the ribosomal RNA (rrn) operons. The chain is Transcription antitermination protein NusB from Sodalis glossinidius (strain morsitans).